The chain runs to 369 residues: Chaperone protein DnaJ (369 aa).

Residues 7-73 (DYYEILGVPR…QKRAMYDRFG (67 aa)) form the J domain. The CR-type zinc finger occupies 143–225 (GAEIPVEYER…CGGSGRVLRK (83 aa)). Residues Cys-156, Cys-159, Cys-173, Cys-176, Cys-199, Cys-202, Cys-213, and Cys-216 each contribute to the Zn(2+) site. CXXCXGXG motif repeat units follow at residues 156–163 (CPRCGGTG), 173–180 (CPSCGGTG), 199–206 (CERCGGTG), and 213–220 (CHECGGSG).

This sequence belongs to the DnaJ family. As to quaternary structure, homodimer. Zn(2+) serves as cofactor.

The protein resides in the cytoplasm. Its function is as follows. Participates actively in the response to hyperosmotic and heat shock by preventing the aggregation of stress-denatured proteins and by disaggregating proteins, also in an autonomous, DnaK-independent fashion. Unfolded proteins bind initially to DnaJ; upon interaction with the DnaJ-bound protein, DnaK hydrolyzes its bound ATP, resulting in the formation of a stable complex. GrpE releases ADP from DnaK; ATP binding to DnaK triggers the release of the substrate protein, thus completing the reaction cycle. Several rounds of ATP-dependent interactions between DnaJ, DnaK and GrpE are required for fully efficient folding. Also involved, together with DnaK and GrpE, in the DNA replication of plasmids through activation of initiation proteins. The polypeptide is Chaperone protein DnaJ (Thermotoga petrophila (strain ATCC BAA-488 / DSM 13995 / JCM 10881 / RKU-1)).